A 397-amino-acid polypeptide reads, in one-letter code: Lysophospholipid transporter LplT (397 aa).

Over 1 to 17 the chain is Periplasmic; that stretch reads MSESVHTNTSLWSKGMK. A helical transmembrane segment spans residues 18 to 38; sequence AVIVAQFLSAFGDNALLFATL. The Cytoplasmic portion of the chain corresponds to 39 to 52; sequence ALLKAQFYPEWSQP. The chain crosses the membrane as a helical span at residues 53–73; it reads ILQMVFVGAYILFAPFVGQVA. The Periplasmic segment spans residues 74–90; sequence DSFAKGRVMMFANGLKL. Residues 91 to 111 form a helical membrane-spanning segment; sequence LGAASICFGINPFLGYTLVGV. Residues 112 to 144 lie on the Cytoplasmic side of the membrane; it reads GAAAYSPAKYGILGELTTGSKLVKANGLMEAST. Residues 145–165 traverse the membrane as a helical segment; that stretch reads IAAILLGSVAGGVLADWHVLV. Position 166 (alanine 166) is a topological domain, periplasmic. The chain crosses the membrane as a helical span at residues 167–187; sequence LAACALAYGGAVVANIYIPKL. Topologically, residues 188-226 are cytoplasmic; it reads AAARPGQSWNLINMTRSFLNACTSLWRNGETRFSLVGTS. The chain crosses the membrane as a helical span at residues 227–247; sequence LFWGAGVTLRFLLVLWVPVAL. Residues 248 to 256 are Periplasmic-facing; the sequence is GITDNATPT. Residues 257 to 277 form a helical membrane-spanning segment; it reads YLNAMVAIGIVVGAGAAAKLV. The Cytoplasmic segment spans residues 278-280; that stretch reads TLE. Residues 281–301 traverse the membrane as a helical segment; the sequence is TVSRCMPAGILIGVVVLIFSL. Residues 302–304 are Periplasmic-facing; sequence QHE. The chain crosses the membrane as a helical span at residues 305 to 325; sequence LLPAYALLMLIGVLGGFFVVP. At 326–343 the chain is on the cytoplasmic side; that stretch reads LNALLQERGKKSVGAGNA. The chain crosses the membrane as a helical span at residues 344-364; the sequence is IAVQNLGENSAMLLMLGIYSL. Over 365 to 366 the chain is Periplasmic; the sequence is AV. The chain crosses the membrane as a helical span at residues 367–387; sequence MVGIPVVPIGIGFGTLFALAI. Topologically, residues 388–397 are cytoplasmic; that stretch reads TALWIWQRRH.

Belongs to the major facilitator superfamily. LplT (TC 2.A.1.42) family.

The protein localises to the cell inner membrane. Catalyzes the facilitated diffusion of 2-acyl-glycero-3-phosphoethanolamine (2-acyl-GPE) into the cell. The chain is Lysophospholipid transporter LplT from Escherichia coli O9:H4 (strain HS).